A 169-amino-acid polypeptide reads, in one-letter code: Putative prolyl-tRNA synthetase associated domain-containing protein 1 (169 aa).

It belongs to the PRORSD1 family.

The sequence is that of Putative prolyl-tRNA synthetase associated domain-containing protein 1 (PRORSD1P) from Homo sapiens (Human).